Reading from the N-terminus, the 217-residue chain is Adenylate kinase (217 aa).

An ATP-binding site is contributed by G12–S17. The segment at S32 to V61 is NMP. Residues T33, R38, L59 to V61, G87 to R90, and Q94 contribute to the AMP site. The interval G128–D165 is LID. R129 serves as a coordination point for ATP. C132 and C135 together coordinate Zn(2+). I138–Y139 contributes to the ATP binding site. Zn(2+) is bound by residues C152 and D155. R162 and R173 together coordinate AMP. Q201 is a binding site for ATP.

This sequence belongs to the adenylate kinase family. In terms of assembly, monomer.

Its subcellular location is the cytoplasm. The catalysed reaction is AMP + ATP = 2 ADP. The protein operates within purine metabolism; AMP biosynthesis via salvage pathway; AMP from ADP: step 1/1. Functionally, catalyzes the reversible transfer of the terminal phosphate group between ATP and AMP. Plays an important role in cellular energy homeostasis and in adenine nucleotide metabolism. In Acholeplasma laidlawii (strain PG-8A), this protein is Adenylate kinase.